The sequence spans 355 residues: UDP-N-acetylglucosamine--N-acetylmuramyl-(pentapeptide) pyrophosphoryl-undecaprenol N-acetylglucosamine transferase (355 aa).

UDP-N-acetyl-alpha-D-glucosamine is bound by residues 15-17 (TGG), Asn-127, Arg-163, Ser-191, Ile-244, 263-268 (ALTVSE), and Gln-288.

It belongs to the glycosyltransferase 28 family. MurG subfamily.

The protein resides in the cell inner membrane. It carries out the reaction di-trans,octa-cis-undecaprenyl diphospho-N-acetyl-alpha-D-muramoyl-L-alanyl-D-glutamyl-meso-2,6-diaminopimeloyl-D-alanyl-D-alanine + UDP-N-acetyl-alpha-D-glucosamine = di-trans,octa-cis-undecaprenyl diphospho-[N-acetyl-alpha-D-glucosaminyl-(1-&gt;4)]-N-acetyl-alpha-D-muramoyl-L-alanyl-D-glutamyl-meso-2,6-diaminopimeloyl-D-alanyl-D-alanine + UDP + H(+). It functions in the pathway cell wall biogenesis; peptidoglycan biosynthesis. Cell wall formation. Catalyzes the transfer of a GlcNAc subunit on undecaprenyl-pyrophosphoryl-MurNAc-pentapeptide (lipid intermediate I) to form undecaprenyl-pyrophosphoryl-MurNAc-(pentapeptide)GlcNAc (lipid intermediate II). This chain is UDP-N-acetylglucosamine--N-acetylmuramyl-(pentapeptide) pyrophosphoryl-undecaprenol N-acetylglucosamine transferase, found in Sodalis glossinidius (strain morsitans).